The sequence spans 23 residues: Phospholipase A1 verutoxin-1 (23 aa).

It belongs to the AB hydrolase superfamily. Lipase family. Post-translationally, contains six disulfide bonds. Expressed by the venom gland.

The protein localises to the secreted. It catalyses the reaction a 1,2-diacyl-sn-glycero-3-phosphocholine + H2O = a 2-acyl-sn-glycero-3-phosphocholine + a fatty acid + H(+). The catalysed reaction is 1-(9Z-octadecenoyl)-2-hexadecanoyl-sn-glycero-3-phosphocholine + H2O = 2-hexadecanoyl-sn-glycero-3-phosphocholine + (9Z)-octadecenoate + H(+). The enzyme catalyses a 1-acyl-sn-glycero-3-phosphocholine + H2O = sn-glycerol 3-phosphocholine + a fatty acid + H(+). The protein operates within phospholipid metabolism. With respect to regulation, activity is maximal in the presence of calcium. However, unlike phospholipases A2 whose catalytic activity is strictly calcium-dependent, this enzyme shows considerable catalytic activity on phosphatidylcholine emulsified in calcium free solution; the catalytic activity of VT-1 assayed in the absence of calcium ions is 18-20% of that assayed in solution containing calcium ions. Its function is as follows. Catalyzes the hydrolysis of glycerophospholipids such as phosphatidylcholine (1,2-diacyl-sn-glycero-3-phosphocholine) and has a moderate activity to hydrolyze lysoglycerophospholipids such as lysophosphatidylcholine (1-acyl-sn-glycero-3-phosphocholine), but is unable to hydrolyze sphingomyelin. Liberates the fatty acid from the sn-1 position of 1,2-diacyl-sn-glycero-3-phosphocholine mainly, indicating phospholipase activity of the A1 type. In addition to acting as an allergen, it possesses a moderate hemolytic activity on red blood cells of mice (3% of hemolysis at 3.0 ug/ml). The sequence is that of Phospholipase A1 verutoxin-1 from Vespa velutina (Asian yellow-legged hornet).